A 186-amino-acid polypeptide reads, in one-letter code: Ribonuclease M5 (186 aa).

The Toprim domain occupies 6-89 (SQVIVVEGRD…AFLKRDEAVP (84 aa)). Residues Glu-12, Asp-58, and Asp-60 each contribute to the Mg(2+) site.

Belongs to the ribonuclease M5 family. Requires Mg(2+) as cofactor.

It localises to the cytoplasm. It catalyses the reaction Endonucleolytic cleavage of RNA, removing 21 and 42 nucleotides, respectively, from the 5'- and 3'-termini of a 5S-rRNA precursor.. Functionally, required for correct processing of both the 5' and 3' ends of 5S rRNA precursor. Cleaves both sides of a double-stranded region yielding mature 5S rRNA in one step. The protein is Ribonuclease M5 of Streptococcus pneumoniae (strain ATCC BAA-255 / R6).